Reading from the N-terminus, the 1710-residue chain is Latrophilin Cirl (1710 aa).

Over M1–R767 the chain is Extracellular. The region spanning A25–I114 is the SUEL-type lectin domain. N-linked (GlcNAc...) asparagine glycosylation is present at N142. The segment at Q183–S304 is disordered. 2 stretches are compositionally biased toward polar residues: residues T185 to A198 and N256 to I265. N256 is a glycosylation site (N-linked (GlcNAc...) asparagine). Low complexity-rich tracts occupy residues D275–S285 and S295–S304. N-linked (GlcNAc...) asparagine glycans are attached at residues N302 and N341. Residues Y376–S400 form a disordered region. Low complexity predominate over residues S384 to D394. N-linked (GlcNAc...) asparagine glycans are attached at residues N398, N655, N703, and N730. Residues R561–H754 enclose the GAIN-B domain. Intrachain disulfides connect C709–C736 and C724–C738. The interval C709 to H754 is GPS. A helical transmembrane segment spans residues I768–L788. At K789–T801 the chain is on the cytoplasmic side. A helical transmembrane segment spans residues S802–I822. Residues E823–S828 are Extracellular-facing. Residues I829–F849 traverse the membrane as a helical segment. Topologically, residues C850–V875 are cytoplasmic. The chain crosses the membrane as a helical span at residues N876–I896. Over D897–F920 the chain is Extracellular. Residues V921–I941 traverse the membrane as a helical segment. The Cytoplasmic segment spans residues M942 to S968. A helical transmembrane segment spans residues F969–A989. Topologically, residues K990 to Y999 are extracellular. A helical membrane pass occupies residues G1000–I1020. Topologically, residues Q1021–K1710 are cytoplasmic. Phosphoserine is present on residues S1156, S1253, S1260, S1329, and S1330. The interval K1234 to H1259 is disordered. Disordered regions lie at residues G1452–R1540 and D1568–H1690. Over residues G1458–R1483 the composition is skewed to low complexity. Acidic residues-rich tracts occupy residues D1491–T1505 and C1515–D1528. The span at Q1638 to L1650 shows a compositional bias: polar residues. Over residues S1651 to H1672 the composition is skewed to low complexity. Residues Q1673–R1689 are compositionally biased toward basic residues.

It belongs to the G-protein coupled receptor 2 family. LN-TM7 subfamily. Forms a heterodimer, consisting of a large extracellular region non-covalently linked to a seven-transmembrane moiety. Post-translationally, proteolytically cleaved into 2 subunits, an extracellular subunit and a seven-transmembrane subunit.

The protein resides in the cell membrane. This chain is Latrophilin Cirl, found in Drosophila erecta (Fruit fly).